Consider the following 187-residue polypeptide: Transmembrane protein 11-A, mitochondrial (187 aa).

A run of 2 helical transmembrane segments spans residues 79-95 (TAVL…LALP) and 102-119 (VSLP…LYGI).

The protein belongs to the TMEM11 family.

Its subcellular location is the mitochondrion inner membrane. In terms of biological role, plays a role in mitochondrial morphogenesis. This is Transmembrane protein 11-A, mitochondrial (tmem11-a) from Xenopus laevis (African clawed frog).